Here is a 553-residue protein sequence, read N- to C-terminus: Undecaprenyl phosphate-alpha-4-amino-4-deoxy-L-arabinose arabinosyl transferase (553 aa).

12 helical membrane-spanning segments follow: residues 8-28 (LLFS…RALW), 81-101 (FAVR…VYWL), 113-133 (LLSA…SYAV), 136-156 (PMVT…AQSA), 176-196 (LMTK…PWMI), 204-224 (LLLF…PWAI), 255-275 (APFW…VGLL), 289-309 (NSGS…FSLA), 313-333 (LPTY…HHGI), 351-371 (VAFG…WGLV), 384-404 (VLLG…CLVA), and 412-432 (AALC…DKVI).

Belongs to the glycosyltransferase 83 family.

It is found in the cell inner membrane. The enzyme catalyses 4-amino-4-deoxy-alpha-L-arabinopyranosyl di-trans,octa-cis-undecaprenyl phosphate + lipid IVA = lipid IIA + di-trans,octa-cis-undecaprenyl phosphate.. It participates in lipopolysaccharide metabolism; 4-amino-4-deoxy-beta-L-arabinose-lipid A biosynthesis. Functionally, catalyzes the transfer of the L-Ara4N moiety of the glycolipid undecaprenyl phosphate-alpha-L-Ara4N to lipid A. The modified arabinose is attached to lipid A and is required for resistance to polymyxin and cationic antimicrobial peptides. This Erwinia tasmaniensis (strain DSM 17950 / CFBP 7177 / CIP 109463 / NCPPB 4357 / Et1/99) protein is Undecaprenyl phosphate-alpha-4-amino-4-deoxy-L-arabinose arabinosyl transferase.